Reading from the N-terminus, the 266-residue chain is Type 1 encapsulin shell protein (266 aa).

This sequence belongs to the encapsulin family. Family 1 subfamily. This encapsulin nanocompartment is formed by 60 subunits; monomers form 12 pentamers which assemble to form shells. Shells are loaded with 4 encapsulated ferritin-like protein decamers (EncFtn) in a tetrahedral arrangement. A 3 nm gap is consistently seen between the shell and the cargo.

It localises to the encapsulin nanocompartment. Functionally, shell component of a type 1 encapsulin nanocompartment. Assembles into proteinaceous shells about 21 nm in diameter. Small pores form at, or close to, the 2-, 3-, and 5-fold symmetry axes. Data analysis suggests the 5-fold pores open and close with maximal and minimal aperatures of 15 and 5 Angstroms. Cargo protein Fer (ferritin-like protein, probably stores iron) is targeted to the interior via its C-terminal extension; empty intact shells can be isolated in the absence of cargo protein. This Haliangium ochraceum (strain DSM 14365 / JCM 11303 / SMP-2) protein is Type 1 encapsulin shell protein.